The chain runs to 351 residues: Nicotinate-nucleotide--dimethylbenzimidazole phosphoribosyltransferase (351 aa).

Glutamate 317 (proton acceptor) is an active-site residue.

Belongs to the CobT family.

The catalysed reaction is 5,6-dimethylbenzimidazole + nicotinate beta-D-ribonucleotide = alpha-ribazole 5'-phosphate + nicotinate + H(+). It participates in nucleoside biosynthesis; alpha-ribazole biosynthesis; alpha-ribazole from 5,6-dimethylbenzimidazole: step 1/2. Catalyzes the synthesis of alpha-ribazole-5'-phosphate from nicotinate mononucleotide (NAMN) and 5,6-dimethylbenzimidazole (DMB). In Pseudomonas fluorescens (strain SBW25), this protein is Nicotinate-nucleotide--dimethylbenzimidazole phosphoribosyltransferase.